The chain runs to 125 residues: Small ribosomal subunit protein eS8 (125 aa).

A disordered region spans residues 1-20 (MIWQGRSRRKPSGGFYRKAR).

The protein belongs to the eukaryotic ribosomal protein eS8 family. As to quaternary structure, part of the 30S ribosomal subunit.

This chain is Small ribosomal subunit protein eS8 (rps8e), found in Archaeoglobus fulgidus (strain ATCC 49558 / DSM 4304 / JCM 9628 / NBRC 100126 / VC-16).